We begin with the raw amino-acid sequence, 549 residues long: Oxygen-dependent choline dehydrogenase (549 aa).

4–33 (DYVIVGSGSAGSAIAYRLSEDGRYSVIVIE) provides a ligand contact to FAD. H465 (proton acceptor) is an active-site residue. Residues 528–549 (KTPLPRSNQEPWVNPRAAVSDR) form a disordered region.

Belongs to the GMC oxidoreductase family. Requires FAD as cofactor.

It catalyses the reaction choline + A = betaine aldehyde + AH2. The catalysed reaction is betaine aldehyde + NAD(+) + H2O = glycine betaine + NADH + 2 H(+). It functions in the pathway amine and polyamine biosynthesis; betaine biosynthesis via choline pathway; betaine aldehyde from choline (cytochrome c reductase route): step 1/1. Involved in the biosynthesis of the osmoprotectant glycine betaine. Catalyzes the oxidation of choline to betaine aldehyde and betaine aldehyde to glycine betaine at the same rate. This is Oxygen-dependent choline dehydrogenase from Agrobacterium fabrum (strain C58 / ATCC 33970) (Agrobacterium tumefaciens (strain C58)).